The primary structure comprises 138 residues: Large ribosomal subunit protein uL16 (138 aa).

Basic residues predominate over residues 1 to 13 (MLQPKRRKYRKEQ). The segment at 1–22 (MLQPKRRKYRKEQKGRNTGVAT) is disordered.

Belongs to the universal ribosomal protein uL16 family. As to quaternary structure, part of the 50S ribosomal subunit.

In terms of biological role, binds 23S rRNA and is also seen to make contacts with the A and possibly P site tRNAs. The polypeptide is Large ribosomal subunit protein uL16 (Paraburkholderia phymatum (strain DSM 17167 / CIP 108236 / LMG 21445 / STM815) (Burkholderia phymatum)).